Reading from the N-terminus, the 186-residue chain is Putative 3-methyladenine DNA glycosylase (186 aa).

This sequence belongs to the DNA glycosylase MPG family.

This chain is Putative 3-methyladenine DNA glycosylase, found in Borreliella burgdorferi (strain ATCC 35210 / DSM 4680 / CIP 102532 / B31) (Borrelia burgdorferi).